The primary structure comprises 236 residues: Zinc finger AN1 domain-containing stress-associated protein 13 (236 aa).

2 disordered regions span residues 48-81 and 150-173; these read KEGR…PGKR and TVPE…AKTK. Positions 66–75 are enriched in polar residues; the sequence is RLQLPTTSIV. The AN1-type; degenerate zinc-finger motif lies at 170-216; the sequence is AKTKSRCAACGRRVGLMGFECRCGAVFCGAHPLLGQARLWLRLQGRA. Residues Cys-176, Cys-179, Cys-197, and His-200 each contribute to the Zn(2+) site.

May be involved in environmental stress response. This is Zinc finger AN1 domain-containing stress-associated protein 13 (SAP13) from Oryza sativa subsp. japonica (Rice).